A 385-amino-acid chain; its full sequence is 1-deoxy-D-xylulose 5-phosphate reductoisomerase (385 aa).

NADPH-binding residues include Thr-10, Gly-11, Ser-12, Ile-13, Lys-37, and Asn-124. Lys-125 is a 1-deoxy-D-xylulose 5-phosphate binding site. Glu-126 lines the NADPH pocket. Asp-150 is a Mn(2+) binding site. Positions 151, 152, 176, and 199 each coordinate 1-deoxy-D-xylulose 5-phosphate. Glu-152 contributes to the Mn(2+) binding site. Gly-205 serves as a coordination point for NADPH. Positions 212, 217, 218, and 221 each coordinate 1-deoxy-D-xylulose 5-phosphate. A Mn(2+)-binding site is contributed by Glu-221.

The protein belongs to the DXR family. It depends on Mg(2+) as a cofactor. Requires Mn(2+) as cofactor.

It catalyses the reaction 2-C-methyl-D-erythritol 4-phosphate + NADP(+) = 1-deoxy-D-xylulose 5-phosphate + NADPH + H(+). The protein operates within isoprenoid biosynthesis; isopentenyl diphosphate biosynthesis via DXP pathway; isopentenyl diphosphate from 1-deoxy-D-xylulose 5-phosphate: step 1/6. In terms of biological role, catalyzes the NADPH-dependent rearrangement and reduction of 1-deoxy-D-xylulose-5-phosphate (DXP) to 2-C-methyl-D-erythritol 4-phosphate (MEP). The polypeptide is 1-deoxy-D-xylulose 5-phosphate reductoisomerase (Clostridium botulinum (strain Okra / Type B1)).